The primary structure comprises 117 residues: Heat shock 70 kDa protein 1-like (117 aa).

ATP contacts are provided by residues 72 to 75 (ERAK) and 84 to 87 (GSTR).

It belongs to the heat shock protein 70 family. In terms of assembly, interacts with PRKN. In terms of tissue distribution, detected at higher levels in caput epididymal spermatazoa than in cauda epididymal spermatazoa (at protein level).

In terms of biological role, molecular chaperone implicated in a wide variety of cellular processes, including protection of the proteome from stress, folding and transport of newly synthesized polypeptides, activation of proteolysis of misfolded proteins and the formation and dissociation of protein complexes. Plays a pivotal role in the protein quality control system, ensuring the correct folding of proteins, the re-folding of misfolded proteins and controlling the targeting of proteins for subsequent degradation. This is achieved through cycles of ATP binding, ATP hydrolysis and ADP release, mediated by co-chaperones. The affinity for polypeptides is regulated by its nucleotide bound state. In the ATP-bound form, it has a low affinity for substrate proteins. However, upon hydrolysis of the ATP to ADP, it undergoes a conformational change that increases its affinity for substrate proteins. It goes through repeated cycles of ATP hydrolysis and nucleotide exchange, which permits cycles of substrate binding and release. Positive regulator of PRKN translocation to damaged mitochondria. The polypeptide is Heat shock 70 kDa protein 1-like (Mesocricetus auratus (Golden hamster)).